A 397-amino-acid polypeptide reads, in one-letter code: Succinate--CoA ligase [ADP-forming] subunit beta (397 aa).

The 236-residue stretch at 9 to 244 folds into the ATP-grasp domain; that stretch reads KEIMKQYGIS…LTEEDPREVQ (236 aa). ATP-binding positions include Lys46, 53–55, Glu99, Leu102, and Glu107; that span reads GRG. Mg(2+)-binding residues include Asn199 and Asp213. Substrate-binding positions include Asn264 and 321-323; that span reads GIM.

The protein belongs to the succinate/malate CoA ligase beta subunit family. Heterotetramer of two alpha and two beta subunits. Mg(2+) is required as a cofactor.

The enzyme catalyses succinate + ATP + CoA = succinyl-CoA + ADP + phosphate. It carries out the reaction GTP + succinate + CoA = succinyl-CoA + GDP + phosphate. The protein operates within carbohydrate metabolism; tricarboxylic acid cycle; succinate from succinyl-CoA (ligase route): step 1/1. Its function is as follows. Succinyl-CoA synthetase functions in the citric acid cycle (TCA), coupling the hydrolysis of succinyl-CoA to the synthesis of either ATP or GTP and thus represents the only step of substrate-level phosphorylation in the TCA. The beta subunit provides nucleotide specificity of the enzyme and binds the substrate succinate, while the binding sites for coenzyme A and phosphate are found in the alpha subunit. This chain is Succinate--CoA ligase [ADP-forming] subunit beta, found in Alkaliphilus metalliredigens (strain QYMF).